Here is a 137-residue protein sequence, read N- to C-terminus: Small ribosomal subunit protein uS11 (137 aa).

Positions 1-30 are disordered; the sequence is MAQAKKGGAPKKGQKTRRREKKNVPHGAAH. Basic residues predominate over residues 8-21; sequence GAPKKGQKTRRREK.

It belongs to the universal ribosomal protein uS11 family. As to quaternary structure, part of the 30S ribosomal subunit. Interacts with proteins S7 and S18. Binds to IF-3.

Its function is as follows. Located on the platform of the 30S subunit, it bridges several disparate RNA helices of the 16S rRNA. Forms part of the Shine-Dalgarno cleft in the 70S ribosome. In Mycolicibacterium vanbaalenii (strain DSM 7251 / JCM 13017 / BCRC 16820 / KCTC 9966 / NRRL B-24157 / PYR-1) (Mycobacterium vanbaalenii), this protein is Small ribosomal subunit protein uS11.